Consider the following 131-residue polypeptide: Putative protein PTGES3L (131 aa).

The region spanning 3–91 is the CS domain; it reads RQPARTLWYD…KEKVAWPRLT (89 aa).

The protein belongs to the p23/wos2 family.

In Mus musculus (Mouse), this protein is Putative protein PTGES3L (Ptges3l).